The chain runs to 134 residues: Phosphoribosyl-AMP cyclohydrolase (134 aa).

A Mg(2+)-binding site is contributed by aspartate 80. Residue cysteine 81 participates in Zn(2+) binding. Aspartate 82 and aspartate 84 together coordinate Mg(2+). Zn(2+) contacts are provided by cysteine 98 and cysteine 105.

Belongs to the PRA-CH family. Homodimer. Mg(2+) serves as cofactor. Zn(2+) is required as a cofactor.

Its subcellular location is the cytoplasm. It catalyses the reaction 1-(5-phospho-beta-D-ribosyl)-5'-AMP + H2O = 1-(5-phospho-beta-D-ribosyl)-5-[(5-phospho-beta-D-ribosylamino)methylideneamino]imidazole-4-carboxamide. It participates in amino-acid biosynthesis; L-histidine biosynthesis; L-histidine from 5-phospho-alpha-D-ribose 1-diphosphate: step 3/9. Its function is as follows. Catalyzes the hydrolysis of the adenine ring of phosphoribosyl-AMP. This is Phosphoribosyl-AMP cyclohydrolase from Bordetella avium (strain 197N).